A 342-amino-acid polypeptide reads, in one-letter code: Autoinducer 2 import system permease protein LsrC (342 aa).

The Periplasmic portion of the chain corresponds to Met1 to Ala13. The helical transmembrane segment at Leu14–Val34 threads the bilayer. The Cytoplasmic portion of the chain corresponds to Gln35–Thr38. The helical transmembrane segment at Met39–Leu59 threads the bilayer. Residues Thr60–Ser69 are Periplasmic-facing. Residues Ile70–Val90 form a helical membrane-spanning segment. The Cytoplasmic segment spans residues Ala91–Cys92. The chain crosses the membrane as a helical span at residues Val93–Leu113. Position 114 (Lys114) is a topological domain, periplasmic. Residues Ile115–Trp135 traverse the membrane as a helical segment. Over Thr136–Pro154 the chain is Cytoplasmic. The helical transmembrane segment at Leu155–Trp175 threads the bilayer. Over Leu176 to Ser212 the chain is Periplasmic. A helical transmembrane segment spans residues Leu213–Pro233. At Asn234–Gly251 the chain is on the cytoplasmic side. A helical membrane pass occupies residues Gly252 to Leu272. Residues Thr273–Arg283 lie on the Periplasmic side of the membrane. A helical membrane pass occupies residues Ile284 to Asp304. At Gly305–Ala342 the chain is on the cytoplasmic side.

This sequence belongs to the binding-protein-dependent transport system permease family. AraH/RbsC subfamily. As to quaternary structure, the complex is composed of two ATP-binding proteins (LsrA), two transmembrane proteins (LsrC and LsrD) and a solute-binding protein (LsrB).

Its subcellular location is the cell inner membrane. Functionally, part of the ABC transporter complex LsrABCD involved in autoinducer 2 (AI-2) import. Probably responsible for the translocation of the substrate across the membrane. The chain is Autoinducer 2 import system permease protein LsrC (lsrC) from Escherichia coli (strain SMS-3-5 / SECEC).